A 117-amino-acid polypeptide reads, in one-letter code: Large ribosomal subunit protein uL18 (117 aa).

This sequence belongs to the universal ribosomal protein uL18 family. Part of the 50S ribosomal subunit; part of the 5S rRNA/L5/L18/L25 subcomplex. Contacts the 5S and 23S rRNAs.

This is one of the proteins that bind and probably mediate the attachment of the 5S RNA into the large ribosomal subunit, where it forms part of the central protuberance. This is Large ribosomal subunit protein uL18 from Laribacter hongkongensis (strain HLHK9).